A 243-amino-acid chain; its full sequence is DNA repair protein RecO (243 aa).

This sequence belongs to the RecO family.

Functionally, involved in DNA repair and RecF pathway recombination. In Serratia proteamaculans (strain 568), this protein is DNA repair protein RecO.